A 606-amino-acid chain; its full sequence is Mitogen-activated protein kinase kinase kinase 7 (606 aa).

The tract at residues 1–300 is interaction with MAPK8IP1; the sequence is MSTASAASSS…FPGADEPLQY (300 aa). The Protein kinase domain maps to 36 to 291; that stretch reads IEVEEVVGRG…KIMTHLMRYF (256 aa). Residues 42–50 and K63 each bind ATP; that span reads VGRGAFGVV. K72 is covalently cross-linked (Glycyl lysine isopeptide (Lys-Gly) (interchain with G-Cter in ubiquitin)). Residue D156 is the Proton acceptor of the active site. K158 is covalently cross-linked (Glycyl lysine isopeptide (Lys-Gly) (interchain with G-Cter in ubiquitin)). (Microbial infection) O-acetylthreonine; by Yersinia YopJ; alternate is present on residues T184 and T187. Residues T184 and T187 each carry the phosphothreonine; by autocatalysis; alternate modification. S192 carries the post-translational modification Phosphoserine; by autocatalysis. A Glycyl lysine isopeptide (Lys-Gly) (interchain with G-Cter in ubiquitin) cross-link involves residue K209. Residues 301-338 form a disordered region; it reads PCQYSDEGQSNSATSTGSFMDIASTNTSNKSDTNMEQV. Residues 306–338 are compositionally biased toward polar residues; the sequence is DEGQSNSATSTGSFMDIASTNTSNKSDTNMEQV. T341 is modified ((Microbial infection) O-acetylthreonine; by Yersinia YopJ; alternate). Residues 354 to 391 form a disordered region; sequence KNQAKQQSESGRLSLGASRGSSVESLPPTSEGKRMSAD. Low complexity predominate over residues 361-375; the sequence is SESGRLSLGASRGSS. Phosphoserine occurs at positions 367, 389, and 439. Positions 443–452 are enriched in polar residues; the sequence is LTVTGTEPGQ. The tract at residues 443–493 is disordered; it reads LTVTGTEPGQVSSRSSSPSVRMITTSGPTSEKPTRSHPWTPDDSTDTNGSD. T444, T446, and T448 each carry (Microbial infection) O-acetylthreonine; by Yersinia YopJ; alternate. The span at 453 to 463 shows a compositional bias: low complexity; sequence VSSRSSSPSVR. A Phosphoserine modification is found at S455. Polar residues predominate over residues 464 to 473; that stretch reads MITTSGPTSE. T467 carries the (Microbial infection) O-acetylthreonine; by Yersinia YopJ; alternate modification.

The protein belongs to the protein kinase superfamily. STE Ser/Thr protein kinase family. MAP kinase kinase kinase subfamily. As to quaternary structure, can form homodimer. Binds both upstream activators and downstream substrates in multimolecular complexes. Interacts with TAB1/MAP3K7IP1, TAB2/MAP3K7IP2 and TAB3/MAP3K7IP3. Identified in the TRIKA2 complex composed of MAP3K7/TAK1, TAB1/MAP3K7IP1 and TAB2/MAP3K7IP2. Interacts with PPM1L and PPM1B/PP2CB. Interaction with PP2A and PPP6C leads to its repressed activity. Interacts with TRAF6 and TAB1/MAP3K7IP1; during IL-1 signaling. Interacts with TAOK1 and TAOK2; interaction with TAOK2 interferes with MAP3K7 interaction with IKKA, thus preventing NF-kappa-B activation. Interacts with DYNC2I2 (via WD domains). Interacts with CYLD and RBCK1. Interacts with TGFBR1; induces MAP3K7/TAK1 activation by TRAF6. Interacts with MAPK8IP1 and SMAD6. Interacts with isoform 1 of VRK2. Interacts with DAB2; the interaction is induced by TGF-beta stimulation and may mediate TGF-beta stimulated JNK activation. Interacts with TRIM5. Part of a complex containing ITCH, NDFIP1 and MAP3K7. Interacts with IFIT5; the interaction synergizes the recruitment of IKK to MAP3K7 and enhances IKK phosphorylation. Interacts with PLEKHM1 (via N- and C-terminus). Interacts with TRIM8. Found in a complex with SH3RF1, RAC2, MAP2K7/MKK7, MAPK8IP1/JIP1, MAPK8/JNK1 and MAPK9/JNK2. Interacts with SASH1. Interacts with RIPK1. (Microbial infection) Interacts with herpes simplex virus 2 protein US2; this interaction induces MAP3K7 phosphorylation and subsequent activation. Mg(2+) serves as cofactor. Association with TAB1/MAP3K7IP1 promotes autophosphorylation at Ser-192 and subsequent activation. Association with TAB2/MAP3K7IP2, itself associated with free unanchored Lys-63 polyubiquitin chain, promotes autophosphorylation and subsequent activation of MAP3K7. Dephosphorylation at Ser-192 by PPM1B/PP2CB and at Thr-187 by PP2A and PPP6C leads to inactivation. In terms of processing, 'Lys-48'-linked polyubiquitination at Lys-72 is induced by TNFalpha, and leads to proteasomal degradation. Undergoes 'Lys-48'-linked polyubiquitination catalyzed by ITCH. Requires 'Lys-63'-linked polyubiquitination for autophosphorylation and subsequent activation. 'Lys-63'-linked ubiquitination does not lead to proteasomal degradation. Deubiquitinated by CYLD, a protease that selectively cleaves 'Lys-63'-linked ubiquitin chains. Deubiquitinated by Y.enterocolitica YopP. Deubiquitinated by USP19; leading to negative regulation of TNF-alpha- and IL-1beta-triggered NF-kappa-B activation. Post-translationally, (Microbial infection) Cleaved and inactivated by the proteases 3C of coxsackievirus A16 and human enterovirus D68, allowing the virus to disrupt TRAF6-triggered NF-kappa-B induction. (Microbial infection) Acetylation of Thr-184 and Thr-187 by Yersinia YopJ prevents phosphorylation and activation, thus blocking the MAPK signaling pathway. As to expression, isoform 1A is the most abundant in ovary, skeletal muscle, spleen and blood mononuclear cells. Isoform 1B is highly expressed in brain, kidney and small intestine. Isoform 1C is the major form in prostate. Isoform 1D is the less abundant form.

The protein localises to the cytoplasm. It localises to the cell membrane. The catalysed reaction is L-seryl-[protein] + ATP = O-phospho-L-seryl-[protein] + ADP + H(+). The enzyme catalyses L-threonyl-[protein] + ATP = O-phospho-L-threonyl-[protein] + ADP + H(+). Its activity is regulated as follows. Activated by pro-inflammatory cytokines and in response to physical and chemical stresses, including osmotic stress, oxidative stress, arsenic and ultraviolet light irradiation. Activated by 'Lys-63'-linked polyubiquitination and by autophosphorylation. Association with TAB1/MAP3K7IP1 and TAB2/MAP3K7IP2 promotes activation through autophosphorylation, whereas PPM1B/PP2CB, PP2A and PPP6C dephosphorylation leads to inactivation. Ceramides are also able to activate MAP3K7/TAK1. Serine/threonine kinase which acts as an essential component of the MAP kinase signal transduction pathway. Plays an important role in the cascades of cellular responses evoked by changes in the environment. Mediates signal transduction of TRAF6, various cytokines including interleukin-1 (IL-1), transforming growth factor-beta (TGFB), TGFB-related factors like BMP2 and BMP4, toll-like receptors (TLR), tumor necrosis factor receptor CD40 and B-cell receptor (BCR). Once activated, acts as an upstream activator of the MKK/JNK signal transduction cascade and the p38 MAPK signal transduction cascade through the phosphorylation and activation of several MAP kinase kinases like MAP2K1/MEK1, MAP2K3/MKK3, MAP2K6/MKK6 and MAP2K7/MKK7. These MAP2Ks in turn activate p38 MAPKs and c-jun N-terminal kinases (JNKs); both p38 MAPK and JNK pathways control the transcription factors activator protein-1 (AP-1). Independently of MAP2Ks and p38 MAPKs, acts as a key activator of NF-kappa-B by promoting activation of the I-kappa-B-kinase (IKK) core complex. Mechanistically, recruited to polyubiquitin chains of RIPK2 and IKBKG/NEMO via TAB2/MAP3K7IP2 and TAB3/MAP3K7IP3, and catalyzes phosphorylation and activation of IKBKB/IKKB component of the IKK complex, leading to NF-kappa-B activation. In osmotic stress signaling, plays a major role in the activation of MAPK8/JNK1, but not that of NF-kappa-B. Promotes TRIM5 capsid-specific restriction activity. Phosphorylates RIPK1 at 'Ser-321' which positively regulates RIPK1 interaction with RIPK3 to promote necroptosis but negatively regulates RIPK1 kinase activity and its interaction with FADD to mediate apoptosis. Phosphorylates STING1 in response to cGAMP-activation, promoting association between STEEP1 and STING1 and STING1 translocation to COPII vesicles. This is Mitogen-activated protein kinase kinase kinase 7 from Homo sapiens (Human).